The primary structure comprises 106 residues: Movement protein TGB2 (106 aa).

Over 1–9 the chain is Cytoplasmic; it reads MPLTPPPDH. Residues 10–30 traverse the membrane as a helical segment; it reads TKVLLVAAIGLSIVASILTYS. Topologically, residues 31–71 are lumenal; it reads RNTLPQVGDHSHLLPHGGVYKDGTKTIVYGGPRKLNSLEGG. Residues 72 to 92 traverse the membrane as a helical segment; that stretch reads FNLPVQPWFLVILLSAAIFLL. Residues 93–106 lie on the Cytoplasmic side of the membrane; that stretch reads SCRSGHRRVCGQCH.

The protein belongs to the Tymovirales TGBp2 protein family.

Its subcellular location is the host endoplasmic reticulum membrane. In terms of biological role, plays a role in viral cell-to-cell propagation, by facilitating genome transport to neighboring plant cells through plasmosdesmata,. In Chrysanthemum morifolium (Florist's daisy), this protein is Movement protein TGB2.